The primary structure comprises 87 residues: MRAVVTVVGADKIGIVAGVTATLAELEANIIEISQTLMSGAFTMMMVVETQNSDFSAFQAELSRKGEALGVNIHVQNEAIFNAMHKL.

Residues 4 to 76 (VVTVVGADKI…EALGVNIHVQ (73 aa)) form the ACT domain.

Belongs to the UPF0237 family.

This Lactococcus lactis subsp. lactis (strain IL1403) (Streptococcus lactis) protein is UPF0237 protein YjhC (yjhC).